The chain runs to 617 residues: Guanylate cyclase soluble subunit beta-2 (617 aa).

Histidine 26 is a heme binding site. The region spanning 391–519 is the Guanylate cyclase domain; the sequence is TILFSDVVTF…DTVNTASRME (129 aa). Residues 577–586 show a composition bias toward basic and acidic residues; that stretch reads RSKTPVDHKG. The segment at 577–605 is disordered; sequence RSKTPVDHKGSTQKASLPTTKLQGSVQPS. Residues 588–604 are compositionally biased toward polar residues; sequence TQKASLPTTKLQGSVQP.

Belongs to the adenylyl cyclase class-4/guanylyl cyclase family. Heterodimer of an alpha and a beta chain. Requires heme as cofactor. As to expression, expressed in gastric signet ring cell carcinoma, but not in the normal stomach.

The protein localises to the cytoplasm. It catalyses the reaction GTP = 3',5'-cyclic GMP + diphosphate. Activated by nitric oxide in the presence of magnesium or manganese ions. The polypeptide is Guanylate cyclase soluble subunit beta-2 (GUCY1B2) (Homo sapiens (Human)).